Here is a 102-residue protein sequence, read N- to C-terminus: Cytochrome c-553 (102 aa).

The N-terminal stretch at 1 to 23 (MKRILVVMSICAALAFGVSAAMA) is a signal peptide. 4 residues coordinate heme c: C33, C36, H37, and M80.

In terms of processing, binds 1 heme c group covalently per subunit.

It localises to the periplasm. Its function is as follows. Natural electron acceptor for a formate dehydrogenase. This Nitratidesulfovibrio vulgaris (strain DSM 19637 / Miyazaki F) (Desulfovibrio vulgaris) protein is Cytochrome c-553.